The following is a 510-amino-acid chain: MKLKPIEVAEILQKEIANINCLSELEEVGQVITVGDGIAQIYGLANVKSGEVVEFKSGVKGLVLNLENDSVGVVIMGDDNQVQQGDNVKRTKEVLEVPVGKALLGRVVDALGNPIDGKGDIASKEYRHIEMKAPGIIERTSVSEPVQTGIKAIDSLIPIGRGQRELIIGDRQTGKTAIAVDTIINQKQAHSLTNESDKIYCIYVAIGQKRSSVAQIVKKLEDAGAMDYTLIVSATASEAAALQFIAPYSACSMGEYFRDNGMHALIIYDDLSKHAVAYRQISLLLRRPPGREAYPGDVFYLHSRLLERAAKMSEEKGSGSLTALPIIETQAGDVSAYIPTNVISITDGQIFLESELFYKGVRPAVNVGISVSRVGSAAQIKAMKQVAGSVKLELAQFRELESFSQFGSDLDPATKAQIDHGKRLVEILKQAQYNPFPVEEQIVSIYVGTKKYLNDVPLQKVKEFEDKMLTEIRLNKKDILESIKNEQCITEETEQKLKAFLENFVKEFVK.

169-176 (GDRQTGKT) serves as a coordination point for ATP.

Belongs to the ATPase alpha/beta chains family. F-type ATPases have 2 components, CF(1) - the catalytic core - and CF(0) - the membrane proton channel. CF(1) has five subunits: alpha(3), beta(3), gamma(1), delta(1), epsilon(1). CF(0) has three main subunits: a(1), b(2) and c(9-12). The alpha and beta chains form an alternating ring which encloses part of the gamma chain. CF(1) is attached to CF(0) by a central stalk formed by the gamma and epsilon chains, while a peripheral stalk is formed by the delta and b chains.

The protein resides in the cell inner membrane. It carries out the reaction ATP + H2O + 4 H(+)(in) = ADP + phosphate + 5 H(+)(out). In terms of biological role, produces ATP from ADP in the presence of a proton gradient across the membrane. The alpha chain is a regulatory subunit. The protein is ATP synthase subunit alpha of Rickettsia rickettsii (strain Iowa).